The chain runs to 248 residues: Type III pantothenate kinase (248 aa).

8 to 15 (DAGNTRTK) serves as a coordination point for ATP. Substrate is bound by residues Y87 and 94-97 (GVDR). Residue D96 is the Proton acceptor of the active site. T119 is an ATP binding site. Residue T173 participates in substrate binding.

It belongs to the type III pantothenate kinase family. In terms of assembly, homodimer. NH4(+) is required as a cofactor. It depends on K(+) as a cofactor.

It localises to the cytoplasm. It carries out the reaction (R)-pantothenate + ATP = (R)-4'-phosphopantothenate + ADP + H(+). It functions in the pathway cofactor biosynthesis; coenzyme A biosynthesis; CoA from (R)-pantothenate: step 1/5. Its function is as follows. Catalyzes the phosphorylation of pantothenate (Pan), the first step in CoA biosynthesis. The polypeptide is Type III pantothenate kinase (Methylobacillus flagellatus (strain ATCC 51484 / DSM 6875 / VKM B-1610 / KT)).